A 48-amino-acid chain; its full sequence is M-oxotoxin-Ot1b (48 aa).

It localises to the secreted. The protein resides in the target cell membrane. Functionally, disrupts cell membranes, particularly those rich in phosphocholine, through formation of pores. Has antimicrobial activity, hemolytic activity and insecticidal activity. This chain is M-oxotoxin-Ot1b, found in Oxyopes takobius (Lynx spider).